The sequence spans 142 residues: Large ribosomal subunit protein uL11 (142 aa).

The protein belongs to the universal ribosomal protein uL11 family. Part of the ribosomal stalk of the 50S ribosomal subunit. Interacts with L10 and the large rRNA to form the base of the stalk. L10 forms an elongated spine to which L12 dimers bind in a sequential fashion forming a multimeric L10(L12)X complex. One or more lysine residues are methylated.

Its function is as follows. Forms part of the ribosomal stalk which helps the ribosome interact with GTP-bound translation factors. The sequence is that of Large ribosomal subunit protein uL11 from Xanthomonas oryzae pv. oryzae (strain MAFF 311018).